The sequence spans 293 residues: MLTGSIVALVTPMDKTGEIDFLTLKQLVEFHIKSGTAAIVAVGTSGESATLDVDTHAKVVIKALEFADGRIPIIAGNGANSTSEAVLLSKRFADSGIIAGLNVTPYYNKPTQEGLFQHFKAIAESCDLPQILYNVPGRTSVDMLPETVARLSKIKNIIGIKEATGDLNRLADIKALVADDFALYSGDDATGCDFLLQGGHGVISVTTNIAPVEMAKMCEYALSGQADLAKKIDNQLAPVHKYLFIESNPIPVKWACAEMGLLPSADCRLPLMMLDKKYQPIVRNALIEAKLIS.

Ser-45 lines the pyruvate pocket. Tyr-133 acts as the Proton donor/acceptor in catalysis. Residue Lys-161 is the Schiff-base intermediate with substrate of the active site. A pyruvate-binding site is contributed by Ile-203.

It belongs to the DapA family. In terms of assembly, homotetramer; dimer of dimers.

The protein localises to the cytoplasm. The catalysed reaction is L-aspartate 4-semialdehyde + pyruvate = (2S,4S)-4-hydroxy-2,3,4,5-tetrahydrodipicolinate + H2O + H(+). It functions in the pathway amino-acid biosynthesis; L-lysine biosynthesis via DAP pathway; (S)-tetrahydrodipicolinate from L-aspartate: step 3/4. Catalyzes the condensation of (S)-aspartate-beta-semialdehyde [(S)-ASA] and pyruvate to 4-hydroxy-tetrahydrodipicolinate (HTPA). The sequence is that of 4-hydroxy-tetrahydrodipicolinate synthase from Psychromonas ingrahamii (strain DSM 17664 / CCUG 51855 / 37).